The chain runs to 384 residues: S-adenosylmethionine synthase (384 aa).

Residue His15 coordinates ATP. Asp17 lines the Mg(2+) pocket. Position 43 (Glu43) interacts with K(+). L-methionine is bound by residues Glu56 and Gln99. Positions 99-109 (QSPDINQGVDR) are flexible loop. Residues 164–166 (DAK), 230–231 (RF), Asp239, 245–246 (RK), Ala262, and Lys266 contribute to the ATP site. Asp239 is a binding site for L-methionine. An L-methionine-binding site is contributed by Lys270.

The protein belongs to the AdoMet synthase family. In terms of assembly, homotetramer; dimer of dimers. Mg(2+) is required as a cofactor. Requires K(+) as cofactor.

Its subcellular location is the cytoplasm. It catalyses the reaction L-methionine + ATP + H2O = S-adenosyl-L-methionine + phosphate + diphosphate. It functions in the pathway amino-acid biosynthesis; S-adenosyl-L-methionine biosynthesis; S-adenosyl-L-methionine from L-methionine: step 1/1. Catalyzes the formation of S-adenosylmethionine (AdoMet) from methionine and ATP. The overall synthetic reaction is composed of two sequential steps, AdoMet formation and the subsequent tripolyphosphate hydrolysis which occurs prior to release of AdoMet from the enzyme. The sequence is that of S-adenosylmethionine synthase from Escherichia fergusonii (strain ATCC 35469 / DSM 13698 / CCUG 18766 / IAM 14443 / JCM 21226 / LMG 7866 / NBRC 102419 / NCTC 12128 / CDC 0568-73).